A 213-amino-acid chain; its full sequence is Redox-sensing transcriptional repressor Rex (213 aa).

A DNA-binding region (H-T-H motif) is located at residues 17–56 (LYYRIFKRFYADQVEKASSKQIADAMGIDSATVRRDFSYF). 91–96 (GCGNIG) is a binding site for NAD(+).

It belongs to the transcriptional regulatory Rex family. In terms of assembly, homodimer.

The protein resides in the cytoplasm. In terms of biological role, modulates transcription in response to changes in cellular NADH/NAD(+) redox state. The polypeptide is Redox-sensing transcriptional repressor Rex (Streptococcus uberis (strain ATCC BAA-854 / 0140J)).